A 113-amino-acid chain; its full sequence is Retrotransposon Gag-like protein 8 (113 aa).

This sequence belongs to the FAM127 family.

The chain is Retrotransposon Gag-like protein 8 (RTL8A) from Bos taurus (Bovine).